Reading from the N-terminus, the 304-residue chain is Porphobilinogen deaminase (304 aa).

An S-(dipyrrolylmethanemethyl)cysteine modification is found at Cys-239.

Belongs to the HMBS family. In terms of assembly, monomer. It depends on dipyrromethane as a cofactor.

The enzyme catalyses 4 porphobilinogen + H2O = hydroxymethylbilane + 4 NH4(+). It participates in porphyrin-containing compound metabolism; protoporphyrin-IX biosynthesis; coproporphyrinogen-III from 5-aminolevulinate: step 2/4. In terms of biological role, tetrapolymerization of the monopyrrole PBG into the hydroxymethylbilane pre-uroporphyrinogen in several discrete steps. The chain is Porphobilinogen deaminase from Brucella ovis (strain ATCC 25840 / 63/290 / NCTC 10512).